Here is a 271-residue protein sequence, read N- to C-terminus: Formamidopyrimidine-DNA glycosylase (271 aa).

The Schiff-base intermediate with DNA role is filled by proline 2. Glutamate 3 serves as the catalytic Proton donor. Lysine 58 (proton donor; for beta-elimination activity) is an active-site residue. DNA-binding residues include histidine 91, arginine 110, and arginine 152. The segment at serine 237–histidine 271 adopts an FPG-type zinc-finger fold. Catalysis depends on arginine 261, which acts as the Proton donor; for delta-elimination activity.

It belongs to the FPG family. In terms of assembly, monomer. The cofactor is Zn(2+).

It catalyses the reaction Hydrolysis of DNA containing ring-opened 7-methylguanine residues, releasing 2,6-diamino-4-hydroxy-5-(N-methyl)formamidopyrimidine.. The catalysed reaction is 2'-deoxyribonucleotide-(2'-deoxyribose 5'-phosphate)-2'-deoxyribonucleotide-DNA = a 3'-end 2'-deoxyribonucleotide-(2,3-dehydro-2,3-deoxyribose 5'-phosphate)-DNA + a 5'-end 5'-phospho-2'-deoxyribonucleoside-DNA + H(+). In terms of biological role, involved in base excision repair of DNA damaged by oxidation or by mutagenic agents. Acts as a DNA glycosylase that recognizes and removes damaged bases. Has a preference for oxidized purines, such as 7,8-dihydro-8-oxoguanine (8-oxoG). Has AP (apurinic/apyrimidinic) lyase activity and introduces nicks in the DNA strand. Cleaves the DNA backbone by beta-delta elimination to generate a single-strand break at the site of the removed base with both 3'- and 5'-phosphates. The protein is Formamidopyrimidine-DNA glycosylase of Geotalea uraniireducens (strain Rf4) (Geobacter uraniireducens).